We begin with the raw amino-acid sequence, 429 residues long: Adenylosuccinate synthetase (429 aa).

GTP is bound by residues 12 to 18 (GDEGKGK) and 40 to 42 (GHT). Catalysis depends on aspartate 13, which acts as the Proton acceptor. Mg(2+) contacts are provided by aspartate 13 and glycine 40. IMP-binding positions include 13 to 16 (DEGK), 38 to 41 (NAGH), threonine 128, arginine 142, glutamine 223, threonine 238, and arginine 302. Catalysis depends on histidine 41, which acts as the Proton donor. 298-304 (TVTGRPR) is a substrate binding site. Residues arginine 304, 330-332 (LLD), and 412-414 (SVG) contribute to the GTP site.

This sequence belongs to the adenylosuccinate synthetase family. As to quaternary structure, homodimer. Mg(2+) serves as cofactor.

It is found in the cytoplasm. It catalyses the reaction IMP + L-aspartate + GTP = N(6)-(1,2-dicarboxyethyl)-AMP + GDP + phosphate + 2 H(+). The protein operates within purine metabolism; AMP biosynthesis via de novo pathway; AMP from IMP: step 1/2. Its function is as follows. Plays an important role in the de novo pathway of purine nucleotide biosynthesis. Catalyzes the first committed step in the biosynthesis of AMP from IMP. This chain is Adenylosuccinate synthetase, found in Lactobacillus helveticus (strain DPC 4571).